We begin with the raw amino-acid sequence, 159 residues long: Protein SPA, chloroplastic (159 aa).

A chloroplast-targeting transit peptide spans 1–47 (MLTAPSLSRFKSPFISSPLKLPTLSSSFFTQKFHQTCRRRNSYPCIK). Residues 56 to 76 (VIAITVGVLSVAIGVGIPVFY) traverse the membrane as a helical segment. The CR-type-like stretch occupies residues 85–145 (KRENTQPCFP…TCTTCQGSGI (61 aa)). CXXCXGXG motif repeat units lie at residues 92–99 (CFPCTGTG), 103–110 (CRFCMGTG), 126–133 (CINCDGAG), and 137–144 (CTTCQGSG).

Expressed in source leaves. Lower levels of expression in fruits and stems.

It localises to the plastid. The protein localises to the chloroplast thylakoid membrane. Functionally, participates in determining harvest index (HI) by affecting source-sink carbon distribution. Up-regulates the conversion of fixed carbon to exportable sugars. In Solanum lycopersicum (Tomato), this protein is Protein SPA, chloroplastic.